A 361-amino-acid chain; its full sequence is Probable cytosolic iron-sulfur protein assembly protein 1 (361 aa).

7 WD repeats span residues 10–49 (AHSDKAWSVSAHKTVPLLATASTDKTSKIYKLSVKQNFPQ), 56–105 (THKR…TEIL), 120–160 (GHEN…EEFE), 167–206 (DHQHDIKHVVWHPHQNLLASSSYDDTIRLYKQDLDDDDWS), 213–265 (GHEG…SIKH), 280–319 (VHQYPIYSVAWSAQSGKIATVGSDGKIVIYIEGDDNSWSI), and 327–361 (HGVHEINSIIWALLDDQSEVLVTAGDDGCVNIWKP).

The protein belongs to the WD repeat CIA1 family. As to quaternary structure, interacts with NAR1.

The protein resides in the cytoplasm. The protein localises to the nucleus. In terms of biological role, essential component of the cytosolic iron-sulfur (Fe/S) protein assembly machinery. Required for the maturation of extramitochondrial Fe/S proteins. The polypeptide is Probable cytosolic iron-sulfur protein assembly protein 1 (Scheffersomyces stipitis (strain ATCC 58785 / CBS 6054 / NBRC 10063 / NRRL Y-11545) (Yeast)).